A 143-amino-acid chain; its full sequence is Class I hydrophobin 20 (143 aa).

A signal peptide spans 1–22; the sequence is MLSHPMKLLFFVFALSALLAAA. Intrachain disulfides connect Cys54-Cys123, Cys62-Cys117, Cys63-Cys102, and Cys124-Cys137.

This sequence belongs to the fungal hydrophobin family. Self-assembles to form functional amyloid fibrils called rodlets. Self-assembly into fibrillar rodlets occurs spontaneously at hydrophobic:hydrophilic interfaces and the rodlets further associate laterally to form amphipathic monolayers.

The protein localises to the secreted. The protein resides in the cell wall. Aerial growth, conidiation, and dispersal of filamentous fungi in the environment rely upon a capability of their secreting small amphipathic proteins called hydrophobins (HPBs) with low sequence identity. Class I can self-assemble into an outermost layer of rodlet bundles on aerial cell surfaces, conferring cellular hydrophobicity that supports fungal growth, development and dispersal; whereas Class II form highly ordered films at water-air interfaces through intermolecular interactions but contribute nothing to the rodlet structure. Hydph20 is a class I hydrophobin involved in mycelial growth. This Pleurotus ostreatus (strain PC15) (Oyster mushroom) protein is Class I hydrophobin 20.